The sequence spans 376 residues: Thymidine kinase (376 aa).

Residues 1–39 (MASYPCHQHASAFDQAARSRGHSNRRTALRPRRQQEATE) form a disordered region. The span at 19-32 (SRGHSNRRTALRPR) shows a compositional bias: basic residues. 56 to 63 (GPHGMGKT) is a binding site for ATP. The active-site Proton acceptor is Glu83. Substrate contacts are provided by Tyr101 and Gln125. Arg216 is a binding site for ATP. Substrate is bound at residue Arg222. Positions 260–280 (GQLSGTAVPPQGAEPQSNAGP) are disordered.

It belongs to the herpesviridae thymidine kinase family. In terms of assembly, homodimer.

The enzyme catalyses thymidine + ATP = dTMP + ADP + H(+). Functionally, catalyzes the transfer of the gamma-phospho group of ATP to thymidine to generate dTMP in the salvage pathway of pyrimidine synthesis. The dTMP serves as a substrate for DNA polymerase during viral DNA replication. Allows the virus to be reactivated and to grow in non-proliferative cells lacking a high concentration of phosphorylated nucleic acid precursors. The protein is Thymidine kinase of Homo sapiens (Human).